A 674-amino-acid polypeptide reads, in one-letter code: Pannexin-2 (674 aa).

Over 11 to 53 (MATALLAGEKLRELILPGSQDDKAGALAALLLQLKLELPFDRV) the chain is Cytoplasmic. A helical membrane pass occupies residues 54 to 74 (VTIGTVLVPILLVTLVFTKNF). Topologically, residues 75–125 (AEEPIYCYTPHNFTRDQALYARGYCWTELRDALPGVDASLWPSLFEHKFLP) are extracellular. A glycan (N-linked (GlcNAc...) asparagine) is linked at Asn-86. The chain crosses the membrane as a helical span at residues 126 to 146 (YALLAFAAIMYVPALGWEFLA). Topologically, residues 147 to 230 (STRLTSELNF…NFLAKLYLAR (84 aa)) are cytoplasmic. Residues 231–251 (HVLILLLSVVPISYLCTYYAT) traverse the membrane as a helical segment. Topologically, residues 252–295 (QKQNEFTCALGASPDGPVGSAGPTVRVSCKLPSVQLQRIIAGVD) are extracellular. Residues 296 to 316 (IVLLCFMNLIILVNLIHLFIF) traverse the membrane as a helical segment. Over 317-674 (RKSNFIFDKL…PRTVVSTVEF (358 aa)) the chain is Cytoplasmic. A compositionally biased stretch (polar residues) spans 394–408 (TTPTVRDSGIQTVDP). Disordered regions lie at residues 394 to 426 (TTPT…VVKR) and 485 to 510 (AHHY…KKHT). Residues Ser-590 and Ser-601 each carry the phosphoserine modification.

This sequence belongs to the pannexin family. Forms PANX1/PANX2-heteromeric intercellular channels on coexpression in paired Xenopus oocytes. Does not form homomeric channels. Post-translationally, S-palmitoylated in neural stem and progenitor cells. In terms of processing, cleaved by CASP3 and CASP7 during apoptosis. Cleavage has no effect on it function. As to expression, expressed in the eye, thyroid, prostate, kidney and liver. Abundantly expressed in the CNS, including hippocampus, olfactory bulb, cortex, cerebellum. Not detected in the white matter.

The protein localises to the cell membrane. The protein resides in the golgi apparatus membrane. It is found in the endoplasmic reticulum membrane. Its function is as follows. Structural component of the gap junctions and the hemichannels. The sequence is that of Pannexin-2 (Panx2) from Rattus norvegicus (Rat).